We begin with the raw amino-acid sequence, 2346 residues long: Acetyl-CoA carboxylase 1 (2346 aa).

Residue M1 is modified to N-acetylmethionine. Phosphoserine occurs at positions 5, 23, 25, 29, 34, 48, 50, and 53. At T58 the chain carries Phosphothreonine. S78 bears the Phosphoserine mark. At S80 the chain carries Phosphoserine; by AMPK. The 502-residue stretch at 117 to 618 (VIEKVLIANN…DTGWLDRLIA (502 aa)) folds into the Biotin carboxylation domain. Positions 275 to 466 (SKRILNVPQE…LPAAQLQIAM (192 aa)) constitute an ATP-grasp domain. Residue 315–320 (GGGGKG) coordinates ATP. Positions 424, 437, and 439 each coordinate Mg(2+). The Mn(2+) site is built by E424, E437, and N439. R441 is an active-site residue. The residue at position 610 (T610) is a Phosphothreonine. The Biotinyl-binding domain occupies 745 to 819 (FEKENDPSVL…DPGCVIAKMQ (75 aa)). K786 is modified (N6-biotinyllysine). A phosphoserine mark is found at S835, S1201, S1216, and S1218. The residue at position 1227 (T1227) is a Phosphothreonine. Phosphoserine occurs at positions 1259, 1263, and 1273. At K1334 the chain carries N6-acetyllysine. The region spanning 1576–1914 (PYVTKDLLQS…SVYSSVPLLN (339 aa)) is the CoA carboxyltransferase N-terminal domain. The segment at 1576–2234 (PYVTKDLLQS…EDLVKKKIHN (659 aa)) is carboxyltransferase. R1823, K2127, and R2129 together coordinate CoA. The CoA carboxyltransferase C-terminal domain occupies 1918–2234 (PIDRVIEFVP…EDLVKKKIHN (317 aa)). T2153 carries the phosphothreonine modification.

Monomer, homodimer, and homotetramer. Can form filamentous polymers. Interacts in its inactive phosphorylated form with the BRCT domains of BRCA1 which prevents ACACA dephosphorylation and inhibits lipid synthesis. Interacts with MID1IP1; interaction with MID1IP1 promotes oligomerization and increases its activity. Requires Mg(2+) as cofactor. The cofactor is Mn(2+). It depends on biotin as a cofactor. In terms of processing, phosphorylation on Ser-1263 is required for interaction with BRCA1. Post-translationally, phosphorylation at Ser-80 by AMPK inactivates enzyme activity. The biotin cofactor is covalently attached to the central biotinyl-binding domain and is required for the catalytic activity. As to expression, expressed at high levels in mammary gland.

The protein resides in the cytoplasm. It is found in the cytosol. The enzyme catalyses hydrogencarbonate + acetyl-CoA + ATP = malonyl-CoA + ADP + phosphate + H(+). Its pathway is lipid metabolism; malonyl-CoA biosynthesis; malonyl-CoA from acetyl-CoA: step 1/1. With respect to regulation, inhibited by phosphorylation. Citrate promotes oligomerization of the protein into filaments that correspond to the most active form of the carboxylase. Its function is as follows. Cytosolic enzyme that catalyzes the carboxylation of acetyl-CoA to malonyl-CoA, the first and rate-limiting step of de novo fatty acid biosynthesis. This is a 2 steps reaction starting with the ATP-dependent carboxylation of the biotin carried by the biotin carboxyl carrier (BCC) domain followed by the transfer of the carboxyl group from carboxylated biotin to acetyl-CoA. This chain is Acetyl-CoA carboxylase 1, found in Ovis aries (Sheep).